The primary structure comprises 1404 residues: DNA-directed RNA polymerase subunit beta' (1404 aa).

Positions 60, 62, 75, and 78 each coordinate Zn(2+). Positions 449, 451, and 453 each coordinate Mg(2+). The Zn(2+) site is built by Cys-778, Cys-852, Cys-859, and Cys-862. The tract at residues 1381–1404 (DRPLEEEEEEEIPQSIADDSDGDE) is disordered. The segment covering 1384–1404 (LEEEEEEEIPQSIADDSDGDE) has biased composition (acidic residues).

This sequence belongs to the RNA polymerase beta' chain family. In terms of assembly, the RNAP catalytic core consists of 2 alpha, 1 beta, 1 beta' and 1 omega subunit. When a sigma factor is associated with the core the holoenzyme is formed, which can initiate transcription. The cofactor is Mg(2+). Requires Zn(2+) as cofactor.

The catalysed reaction is RNA(n) + a ribonucleoside 5'-triphosphate = RNA(n+1) + diphosphate. DNA-dependent RNA polymerase catalyzes the transcription of DNA into RNA using the four ribonucleoside triphosphates as substrates. The polypeptide is DNA-directed RNA polymerase subunit beta' (Leptospira borgpetersenii serovar Hardjo-bovis (strain JB197)).